The primary structure comprises 215 residues: Large ribosomal subunit protein bL25 (215 aa).

A compositionally biased stretch (acidic residues) spans 192–203; it reads EEATEEEEEAAE. The segment at 192–215 is disordered; that stretch reads EEATEEEEEAAEPEVIKRKEEEEE. Positions 205 to 215 are enriched in basic and acidic residues; it reads EVIKRKEEEEE.

It belongs to the bacterial ribosomal protein bL25 family. CTC subfamily. In terms of assembly, part of the 50S ribosomal subunit; part of the 5S rRNA/L5/L18/L25 subcomplex. Contacts the 5S rRNA. Binds to the 5S rRNA independently of L5 and L18.

This is one of the proteins that binds to the 5S RNA in the ribosome where it forms part of the central protuberance. This is Large ribosomal subunit protein bL25 from Thermotoga maritima (strain ATCC 43589 / DSM 3109 / JCM 10099 / NBRC 100826 / MSB8).